Reading from the N-terminus, the 905-residue chain is MISKIITSIFGSSNDRTLKRLKKRVVHINKLEAEFEKLSDQELQAKTAEFKQRLAEGATLDSLLHEAFATVREASRRVMGMRHFDVQLIGGMVLTNRNIAEMRTGEGKTLTATLPCYLNALMGKGVHVVTVNDYLARRDAETNRPLFEFLGMTVAVNIAGLASEVKREAYNADITYSTNSELGFDYLRDNLAHTKEERFQRELYYALVDEVDSILIDEARTPLIISGPAEDTTQIYQAIDTIIPHLISQDKEDSDEYTGEGDFTLDLKNKQAHLTERGMVKVEGILTEMGLMQEGETLYHPARIALLHHVYAALRAHKLFEVDVDYIVKDGEVVIIDEHTGRTMAGRRWSDGLHQAIEAKEHVNIQGENQTVASITYQNYFRLYEKLAGMTGTADTEAFEFQQIYGLDTVVIPTNKPVIRDDRTDLMFKSEQEKFAAIIKGIEECMSRQQPVLVGTASVEKSELLSNALTKAGIKHNVLNAKFHAQEAEIVAEAGAPSAVTIATNMAGRGTDIVLGGNWKAELAKLDNPTEAEIEAIKSAWKTRYDTVMQAGGLHIIGTERHESRRIDNQLRGRSGRQGDPGSSRFYLSLDDTLMRIYLNEGKLNMMRKAFSEEGEAMESKLLTKVIASAQAKVEAHNFEGRKNLLQYDDVANEQRKAIYEQRNYLLETNDISAMIETIRDDVFNHVISRYIPPQSIEEMWDIAGLEEVLHHQFGMELPIQQWLEKEKDLHEETLRERIINLAKQEYQSKEEKVGAEVMRNFEKGVMLQNLDELWKEHLSAMDYLRKGIHLRGYAQKDPKQEYKKESFEMFTNMLELLKSNVISILSRIQVRSQQEIEEAQRQQHEQAEAESANYQATTEEALAKEKRDALPAELTNLQIGRNDPCPCGSGKKYKHCHGSKARYV.

ATP-binding positions include Q87, 105–109 (GEGKT), and D512. The segment at 565 to 584 (RRIDNQLRGRSGRQGDPGSS) is disordered. Positions 886, 888, 897, and 898 each coordinate Zn(2+).

This sequence belongs to the SecA family. In terms of assembly, monomer and homodimer. Part of the essential Sec protein translocation apparatus which comprises SecA, SecYEG and auxiliary proteins SecDF-YajC and YidC. It depends on Zn(2+) as a cofactor.

The protein localises to the cell inner membrane. It localises to the cytoplasm. It carries out the reaction ATP + H2O + cellular proteinSide 1 = ADP + phosphate + cellular proteinSide 2.. Its function is as follows. Part of the Sec protein translocase complex. Interacts with the SecYEG preprotein conducting channel. Has a central role in coupling the hydrolysis of ATP to the transfer of proteins into and across the cell membrane, serving both as a receptor for the preprotein-SecB complex and as an ATP-driven molecular motor driving the stepwise translocation of polypeptide chains across the membrane. In Haemophilus ducreyi (strain 35000HP / ATCC 700724), this protein is Protein translocase subunit SecA.